The primary structure comprises 173 residues: Mediator of RNA polymerase II transcription subunit 10 (173 aa).

The span at 1-20 (MDPNSPMFQNTPQQPMSLQR) shows a compositional bias: polar residues. The segment at 1 to 45 (MDPNSPMFQNTPQQPMSLQRSVDDRIDRERTAKKEKDDEKKKQED) is disordered. Over residues 21–45 (SVDDRIDRERTAKKEKDDEKKKQED) the composition is skewed to basic and acidic residues.

This sequence belongs to the Mediator complex subunit 10 family. As to quaternary structure, component of the Mediator complex.

It localises to the nucleus. Component of the Mediator complex, a coactivator involved in the regulated transcription of nearly all RNA polymerase II-dependent genes. Mediator functions as a bridge to convey information from gene-specific regulatory proteins to the basal RNA polymerase II transcription machinery. Mediator is recruited to promoters by direct interactions with regulatory proteins and serves as a scaffold for the assembly of a functional preinitiation complex with RNA polymerase II and the general transcription factors. The protein is Mediator of RNA polymerase II transcription subunit 10 (mdt-10) of Caenorhabditis briggsae.